The primary structure comprises 291 residues: MSTKIDGKQIAAEIKTNLAERVNRLKAQGIQPGLGTLLVGEDPGSMKYVAGKHADCQEVGITSVKKELPADASFDDIAATVRELNEDPACTGFIVQLPLPKGINENAIIDMIDPAKDADGMHPYNLGELVLHVRGDISTPLPCTPRGVLELLDAYDIDLNGKEVCVLGRGITIGRTIGLMLTRNAVNATVTLCHTGTRDVADHMRRADVIVAAMGSAGFVTPDKIKDGAVLVDVGISRVYDEEAGRYRIKGDVDKACYDKASAYTPNPGGVGPMTRAMLLANVVEMAERHA.

NADP(+) is bound by residues 168–170 (GRG), T195, and I236.

Belongs to the tetrahydrofolate dehydrogenase/cyclohydrolase family. In terms of assembly, homodimer.

The enzyme catalyses (6R)-5,10-methylene-5,6,7,8-tetrahydrofolate + NADP(+) = (6R)-5,10-methenyltetrahydrofolate + NADPH. It carries out the reaction (6R)-5,10-methenyltetrahydrofolate + H2O = (6R)-10-formyltetrahydrofolate + H(+). It participates in one-carbon metabolism; tetrahydrofolate interconversion. Catalyzes the oxidation of 5,10-methylenetetrahydrofolate to 5,10-methenyltetrahydrofolate and then the hydrolysis of 5,10-methenyltetrahydrofolate to 10-formyltetrahydrofolate. This Bifidobacterium longum subsp. infantis (strain ATCC 15697 / DSM 20088 / JCM 1222 / NCTC 11817 / S12) protein is Bifunctional protein FolD.